The following is a 178-amino-acid chain: Protamine-like protein (178 aa).

2 disordered regions span residues 1–27 (PSTT…TVSD) and 77–178 (SVVK…RAKK). 2 stretches are compositionally biased toward basic residues: residues 8–21 (SPKR…RKRT) and 94–178 (PRRR…RAKK). In terms of domain architecture, H15 spans 21–89 (TGPTVSDLIL…KAKGFYKLNK (69 aa)).

Male germ cells.

It is found in the nucleus. Its subcellular location is the chromosome. Functionally, replaces histones in the chromatin of sperm during the haploid phase of spermatogenesis. Compacts sperm DNA into a highly condensed, stable and inactive complex. The protein is Protamine-like protein of Mullus surmuletus (Striped red mullet).